The chain runs to 117 residues: RutC family protein HD_0322 (117 aa).

Belongs to the RutC family.

This is RutC family protein HD_0322 from Haemophilus ducreyi (strain 35000HP / ATCC 700724).